The sequence spans 64 residues: GRCSACAYPAARLRKYNWSVKALRRKTTGTGRMRYLRNVPRRFKTNFREGTEAAPRKKGTAAAS.

The C4-type zinc finger occupies 1 to 6; sequence GRCSAC. Positions 3 and 6 each coordinate Zn(2+).

Belongs to the eukaryotic ribosomal protein eL37 family. Zn(2+) serves as cofactor.

Its function is as follows. Binds to the 23S rRNA. In Solanum lycopersicum (Tomato), this protein is Large ribosomal subunit protein eL37 (RPL37).